The sequence spans 364 residues: MSISIKDKKEELLCRLTDFTKLKGUGCKVPQAELLSLLDGIGEGIGYDCSISQTKFPDIVMIQTTDFFFPLVDDPYFQGKIACANVLSDLYSFGIEDCDNMLMLLACSTDMTAEQRQWSSKLMIQGFNDQAICAGSKVSGGQTVKNPWPIVGGVATSILKTNEFIKPVNAVPGDVLVLTKPLGTQVCVNFHQWLSKPERWEKINTITNAEECEQVFNYATLSMARLNRVGARLMKKYNAHAATDVTGFGILGHSTNLAQNQLLPIRFEIHTLPIIKHMKKLEDHLNHPFKLLKGTSAETSGGLLISMSRENAEAFCKEIYEIEKQPAWIIGDVIDQSSNYDRSKNTSIILENPKIIEVEPNTNF.

Residue selenocysteine 25 is part of the active site. Residue selenocysteine 25 is a non-standard amino acid, selenocysteine. ATP contacts are provided by residues lysine 28, glycine 46 to aspartate 48, aspartate 66, aspartate 89, and glycine 141 to threonine 143. Aspartate 48 is a Mg(2+) binding site. Aspartate 89 serves as a coordination point for Mg(2+). Aspartate 244 lines the Mg(2+) pocket.

It belongs to the selenophosphate synthase 1 family. Class II subfamily. In terms of assembly, homodimer. Mg(2+) is required as a cofactor.

The enzyme catalyses hydrogenselenide + ATP + H2O = selenophosphate + AMP + phosphate + 2 H(+). Functionally, synthesizes selenophosphate from selenide and ATP. This chain is Selenide, water dikinase (selD), found in Dictyostelium discoideum (Social amoeba).